Consider the following 1487-residue polypeptide: Probable lysine-specific demethylase SE14 (1487 aa).

The disordered stretch occupies residues 1–23; that stretch reads MPPQPPPAASASASAPDPAVPAW. The span at 9–22 shows a compositional bias: low complexity; the sequence is ASASASAPDPAVPA. The 42-residue stretch at 30-71 folds into the JmjN domain; that stretch reads APEYRPTESEFADPIAFLSRVEREAAAYGICKVIPPHPRPSR. A compositionally biased stretch (low complexity) spans 86–104; sequence CDAPAPSPAAASDSSIPPS. A disordered region spans residues 86–113; sequence CDAPAPSPAAASDSSIPPSSSSPPPVSA. Residues 232 to 398 form the JmjC domain; it reads NSPWNLQAIA…FAKEAAVRRA (167 aa). 3 residues coordinate Fe cation: H275, E277, and H366. Disordered regions lie at residues 494–555 and 684–718; these read SCSK…DDGD and YGDT…PDVE. 2 stretches are compositionally biased toward basic and acidic residues: residues 498–507 and 542–551; these read APEKKGEDGP and QAPEGEKLDT. The C2H2-type 1; degenerate zinc finger occupies 1377-1400; sequence FQCDIEFCDMTFETKAELRAHQRN. 3 C2H2-type zinc fingers span residues 1400 to 1424, 1430 to 1454, and 1460 to 1486; these read NICT…QCVH, FKCP…IRVH, and YKCS…KFNH.

Fe(2+) serves as cofactor.

It localises to the nucleus. In terms of biological role, histone demethylase that demethylates 'Lys-4' (H3K4me) of histone H3. Involved in the control of flowering time. Has a suppressive effect on floral transition under long day conditions through the demethylation of H3K4me3 in the promoter region of the flower-promoting signal HD3B/RFT1. The sequence is that of Probable lysine-specific demethylase SE14 (SE14) from Oryza sativa subsp. japonica (Rice).